Consider the following 448-residue polypeptide: Solute carrier family 52, riboflavin transporter, member 3-A (448 aa).

3 consecutive transmembrane segments (helical) span residues 11–31 (AFGL…PLIV), 40–60 (LPSY…LVTL), and 73–93 (LAIY…AVFW). Asn-94 carries N-linked (GlcNAc...) asparagine glycosylation. 2 consecutive transmembrane segments (helical) span residues 107–127 (AFFI…VTFL) and 138–158 (ITTY…VALA). 4 N-linked (GlcNAc...) asparagine glycosylation sites follow: Asn-168, Asn-171, Asn-175, and Asn-194. Helical transmembrane passes span 198–218 (EIFF…FLIL), 280–300 (AFIY…LPSV), 315–335 (LSAA…MFFP), 339–359 (LVFL…NMAM), 376–396 (AIIV…KVMV), and 407–427 (ALVW…IIMF).

This sequence belongs to the riboflavin transporter family.

It is found in the cell membrane. It carries out the reaction riboflavin(in) = riboflavin(out). Plasma membrane transporter mediating the uptake by cells of the water soluble vitamin B2/riboflavin that plays a key role in biochemical oxidation-reduction reactions of the carbohydrate, lipid, and amino acid metabolism. This Danio rerio (Zebrafish) protein is Solute carrier family 52, riboflavin transporter, member 3-A (slc52a3a).